A 644-amino-acid chain; its full sequence is Threonine--tRNA ligase (644 aa).

Positions 1 to 61 (MVAITLPDGN…TQDASVEIVT (61 aa)) constitute a TGS domain. A catalytic region spans residues 242 to 533 (DHRKIGKALN…LIEHYAGWMP (292 aa)). 3 residues coordinate Zn(2+): C333, H384, and H510.

Belongs to the class-II aminoacyl-tRNA synthetase family. As to quaternary structure, homodimer. Zn(2+) serves as cofactor.

It is found in the cytoplasm. It catalyses the reaction tRNA(Thr) + L-threonine + ATP = L-threonyl-tRNA(Thr) + AMP + diphosphate + H(+). In terms of biological role, catalyzes the attachment of threonine to tRNA(Thr) in a two-step reaction: L-threonine is first activated by ATP to form Thr-AMP and then transferred to the acceptor end of tRNA(Thr). Also edits incorrectly charged L-seryl-tRNA(Thr). The chain is Threonine--tRNA ligase from Psychrobacter sp. (strain PRwf-1).